A 104-amino-acid polypeptide reads, in one-letter code: Transcription elongation factor A protein-like 9 (104 aa).

A compositionally biased stretch (basic and acidic residues) spans 1 to 27; that stretch reads MKSCQKMEGKPENESEPKHEEEPKPEE. Residues 1 to 44 are disordered; the sequence is MKSCQKMEGKPENESEPKHEEEPKPEEKPEEEEKLEEEAKAKGT.

This sequence belongs to the TFS-II family. TFA subfamily.

Its subcellular location is the nucleus. May be involved in transcriptional regulation. The polypeptide is Transcription elongation factor A protein-like 9 (Homo sapiens (Human)).